The following is a 332-amino-acid chain: Ferredoxin--NADP reductase 1 (332 aa).

The FAD site is built by D35, K43, F48, V88, F123, D284, and T325.

It belongs to the ferredoxin--NADP reductase type 2 family. In terms of assembly, homodimer. FAD serves as cofactor.

It catalyses the reaction 2 reduced [2Fe-2S]-[ferredoxin] + NADP(+) + H(+) = 2 oxidized [2Fe-2S]-[ferredoxin] + NADPH. The chain is Ferredoxin--NADP reductase 1 from Listeria monocytogenes serotype 4b (strain F2365).